The following is a 541-amino-acid chain: Copper transport protein CutJ (541 aa).

Residues 1 to 25 (MKRNRWWIILLLFLVFLPKTSFAHA) form the signal peptide. Residues His24 and His110 each coordinate Cu cation. 8 helical membrane-spanning segments follow: residues 146-166 (AILY…LFWY), 180-200 (ILTG…PIQT), 228-248 (SIWI…IPAI), 262-282 (PLIF…AAVV), 293-313 (FLHL…VLLL), 335-355 (WALT…FFII), 370-390 (LLVK…HFLL), and 407-427 (WAIG…PSPP).

This sequence in the N-terminal section; belongs to the CopC family. The protein in the C-terminal section; belongs to the CopD family.

The protein localises to the cell membrane. Its function is as follows. Involved in uptake of extracellular oxidized copper under copper-limiting conditions. The polypeptide is Copper transport protein CutJ (Bacillus subtilis (strain 168)).